We begin with the raw amino-acid sequence, 353 residues long: MKIVVIGAGAWGTALAVNTAGAVEAAGSDAPRHQVTLWARDAALVKAMQAERANTRYLPGVALPGNLLLQGGGETSLAEAVSGQDLIILATPVSAARGLLQSLQQASVPVVWLSKGFEAPVAAVPHSAPSLASFGLMVHEIRAQVATDLRAGILSGPSFALEVARGQPTALVAASEHAEVRDALVAAFHGTSLRIYASDDIVGVEVGGAVKNVLAIATGLCDGLQLGLNARAALITRGLAEMTRLGVTLGARAETFTGLSGLGDLVLTATGDLSRNRKVGLQLAQGKTLAEAVKSLGHVAEGVYCARTVVQRAAGLGVDMPIAQSVVALLDGKLRPAEAVAALMGRGPTTELA.

Positions 11, 40, and 115 each coordinate NADPH. Lys-115, Gly-156, and Ser-158 together coordinate sn-glycerol 3-phosphate. Position 160 (Ala-160) interacts with NADPH. Residues Lys-211, Asp-264, Ser-274, Arg-275, and Asn-276 each contribute to the sn-glycerol 3-phosphate site. Lys-211 functions as the Proton acceptor in the catalytic mechanism. Arg-275 is a binding site for NADPH. The NADPH site is built by Val-299 and Glu-301.

The protein belongs to the NAD-dependent glycerol-3-phosphate dehydrogenase family.

The protein resides in the cytoplasm. It catalyses the reaction sn-glycerol 3-phosphate + NAD(+) = dihydroxyacetone phosphate + NADH + H(+). It carries out the reaction sn-glycerol 3-phosphate + NADP(+) = dihydroxyacetone phosphate + NADPH + H(+). It participates in membrane lipid metabolism; glycerophospholipid metabolism. Catalyzes the reduction of the glycolytic intermediate dihydroxyacetone phosphate (DHAP) to sn-glycerol 3-phosphate (G3P), the key precursor for phospholipid synthesis. The chain is Glycerol-3-phosphate dehydrogenase [NAD(P)+] from Polaromonas sp. (strain JS666 / ATCC BAA-500).